Reading from the N-terminus, the 133-residue chain is Small ribosomal subunit protein uS8 (133 aa).

It belongs to the universal ribosomal protein uS8 family. As to quaternary structure, part of the 30S ribosomal subunit.

One of the primary rRNA binding proteins, it binds directly to 16S rRNA central domain where it helps coordinate assembly of the platform of the 30S subunit. This is Small ribosomal subunit protein uS8 from Ignicoccus hospitalis (strain KIN4/I / DSM 18386 / JCM 14125).